We begin with the raw amino-acid sequence, 614 residues long: Threonine--tRNA ligase (614 aa).

Positions 1-141 (MRLLLIHSDY…LSKTIVPGEE (141 aa)) are editing domain. The catalytic stretch occupies residues 198–490 (AHVDLMRSKE…ISTQKVPALP (293 aa)). Cys290, His342, and His463 together coordinate Zn(2+).

This sequence belongs to the class-II aminoacyl-tRNA synthetase family. Homodimer. Zn(2+) is required as a cofactor.

The protein resides in the cytoplasm. The enzyme catalyses tRNA(Thr) + L-threonine + ATP = L-threonyl-tRNA(Thr) + AMP + diphosphate + H(+). Functionally, catalyzes the attachment of threonine to tRNA(Thr) in a two-step reaction: L-threonine is first activated by ATP to form Thr-AMP and then transferred to the acceptor end of tRNA(Thr). Also edits incorrectly charged L-seryl-tRNA(Thr). The polypeptide is Threonine--tRNA ligase (Methanoregula boonei (strain DSM 21154 / JCM 14090 / 6A8)).